A 387-amino-acid polypeptide reads, in one-letter code: Norsolorinic acid reductase stcV (387 aa).

Asp-69 provides a ligand contact to NADP(+). Catalysis depends on Tyr-74, which acts as the Proton donor. His-148 lines the substrate pocket. NADP(+) is bound by residues 178 to 179 (SD), Gln-204, 233 to 243 (GALGRGQYKSA), and 301 to 309 (RTVEQLEAN).

Belongs to the aldo/keto reductase family. Aldo/keto reductase 2 subfamily.

It participates in mycotoxin biosynthesis; sterigmatocystin biosynthesis. Functionally, norsolorinic acid reductase; part of the gene cluster that mediates the biosynthesis of sterigmatocystin (ST), a polyketide-derived furanocoumarin which is part of the most toxic and carcinogenic compounds among the known mycotoxins. The first step in the biosynthesis of sterigmatocystin is the production of hexanoate by the fatty acid synthase (FAS) units stcJ and stcK. The polyketide backbone is assembled by the non-reducing polyketide synthase stcA by condensation of the starter hexanoyl-CoA and 7 malonyl-CoA extender units followed by cyclization and release of norsolorinic acid. Norsolorinic acid is the first stable intermediate in the biosynthesis of sterigmatocystin and is converted into averantin (AVN) by the ketoreductase stcE which reduces the hexanoate ketone to an alcohol. Averantin is then oxidized into 5'-hydroxyaverantin (HAVN) by the cytochrome P450 monooxygenase stcF. 5'-hydroxyaverantin is further converted to 5'-oxyaverantin (OAVN) by the 5'-hydroxyaverantin dehydrogenase stcG. The next step is the conversion of OAVN into averufin (AVF) which is catalyzed by a yet to be identified enzyme. The cytochrome P450 monooxygenase stcB and the flavin-binding monooxygenase stcW are both required for the conversion of averufin to 1-hydroxyversicolorone. The esterase stcI probably catalyzes the formation of versiconal hemiacetal acetate from 1-hydroxyversicolorone. The oxydoreductase stcN then probably catalyzes the biosynthetic step from versiconal to versicolorin B (VERB). The next step is performed by the versicolorin B desaturase stcL to produce versicolorin A (VERA). The ketoreductase stcU and the cytochrome P450 monooxygenase stcS are involved in the conversion of versicolorin A to demethylsterigmatocystin. The Baeyer-Villiger oxidas stcQ and the reductase stcR might be involved in the biosynthetic step from versicolorin A to demethylsterigmatocystin. The final step in the biosynthesis of sterigmatocystin is the methylation of demethylsterigmatocystin catalyzed by the methyltransferase stcP. The chain is Norsolorinic acid reductase stcV from Emericella nidulans (strain FGSC A4 / ATCC 38163 / CBS 112.46 / NRRL 194 / M139) (Aspergillus nidulans).